Consider the following 50-residue polypeptide: Large ribosomal subunit protein bL32 (50 aa).

A compositionally biased stretch (basic residues) spans 1-26; it reads MAVPKRRVSHTRSAKRRTHYKITLKK. Positions 1–50 are disordered; the sequence is MAVPKRRVSHTRSAKRRTHYKITLKKPVKDSDGSWKMPHMVNPNTGEYKN.

The protein belongs to the bacterial ribosomal protein bL32 family.

The protein is Large ribosomal subunit protein bL32 of Aliarcobacter butzleri (strain RM4018) (Arcobacter butzleri).